The sequence spans 485 residues: Glycogen synthase (485 aa).

Lysine 21 contributes to the ADP-alpha-D-glucose binding site.

It belongs to the glycosyltransferase 1 family. Bacterial/plant glycogen synthase subfamily.

It carries out the reaction [(1-&gt;4)-alpha-D-glucosyl](n) + ADP-alpha-D-glucose = [(1-&gt;4)-alpha-D-glucosyl](n+1) + ADP + H(+). Its pathway is glycan biosynthesis; glycogen biosynthesis. Its function is as follows. Synthesizes alpha-1,4-glucan chains using ADP-glucose. The chain is Glycogen synthase from Pseudomonas savastanoi pv. phaseolicola (strain 1448A / Race 6) (Pseudomonas syringae pv. phaseolicola (strain 1448A / Race 6)).